The sequence spans 64 residues: Non-structural protein 3b (64 aa).

This is Non-structural protein 3b from Avian infectious bronchitis virus (strain Beaudette) (IBV).